Reading from the N-terminus, the 269-residue chain is BAG family molecular chaperone regulator 4 (269 aa).

The segment at 1–40 is disordered; sequence MMHNSTEESEWEVRPGGMLVQRRDDAASSDHKPLQDPDSA. Positions 21–35 are enriched in basic and acidic residues; sequence QRRDDAASSDHKPLQ. Residues 46-122 form the Ubiquitin-like domain; that stretch reads QTIRITVSHG…LVVVVEDTNK (77 aa). In terms of domain architecture, BAG spans 138-219; that stretch reads AIAAVNAVTG…NLQEAVDKLK (82 aa). The interval 241–269 is disordered; that stretch reads SFGNGVGSLNPPPPASPSANVTQDWEKFD.

As to quaternary structure, binds to the ATPase domain of HSP70/HSC70 chaperones. Interacts with HSP70-1. As to expression, detected in stems, leaves, flowers and roots.

Functionally, co-chaperone that regulates diverse cellular pathways, such as programmed cell death and stress responses. The protein is BAG family molecular chaperone regulator 4 (BAG4) of Arabidopsis thaliana (Mouse-ear cress).